The chain runs to 421 residues: Histidine--tRNA ligase (421 aa).

Belongs to the class-II aminoacyl-tRNA synthetase family. As to quaternary structure, homodimer.

The protein resides in the cytoplasm. It catalyses the reaction tRNA(His) + L-histidine + ATP = L-histidyl-tRNA(His) + AMP + diphosphate + H(+). The chain is Histidine--tRNA ligase from Thermus thermophilus (strain ATCC BAA-163 / DSM 7039 / HB27).